Consider the following 129-residue polypeptide: MDLQVQIIXFLLISVTVIMSRGENVLTQSPAIMAASLGQKVTMTCSASSSVSSSYLHWYQQKSGASPKPLIHRTSNLASGVPARFSGSGSGTSYSLTISSVEAEDDATYYCQQWSGYPFGSGTKLEIKR.

A signal peptide spans 1 to 22 (MDLQVQIIXFLLISVTVIMSRG). A framework-1 region spans residues 23–45 (ENVLTQSPAIMAASLGQKVTMTC). Cysteines 45 and 111 form a disulfide. The tract at residues 46 to 57 (SASSSVSSSYLH) is complementarity-determining-1. The interval 58-72 (WYQQKSGASPKPLIH) is framework-2. The segment at 73 to 79 (RTSNLAS) is complementarity-determining-2. Residues 80–111 (GVPARFSGSGSGTSYSLTISSVEAEDDATYYC) form a framework-3 region. The tract at residues 112–118 (QQWSGYP) is complementarity-determining-3. A framework-4 region spans residues 119–128 (FGSGTKLEIK).

This Mus musculus (Mouse) protein is Ig kappa chain V-IV region S107B.